Consider the following 1100-residue polypeptide: DNA-directed RNA polymerase subunit beta (1100 aa).

Positions 1064 to 1100 are disordered; that stretch reads YEEDKEVDLMADVNQRRTPSRPTYESMSVGDIDDDDD. Residues 1079–1089 are compositionally biased toward polar residues; it reads RRTPSRPTYES.

It belongs to the RNA polymerase beta chain family. In terms of assembly, in cyanobacteria the RNAP catalytic core is composed of 2 alpha, 1 beta, 1 beta', 1 gamma and 1 omega subunit. When a sigma factor is associated with the core the holoenzyme is formed, which can initiate transcription.

The catalysed reaction is RNA(n) + a ribonucleoside 5'-triphosphate = RNA(n+1) + diphosphate. Functionally, DNA-dependent RNA polymerase catalyzes the transcription of DNA into RNA using the four ribonucleoside triphosphates as substrates. This Synechococcus sp. (strain ATCC 27144 / PCC 6301 / SAUG 1402/1) (Anacystis nidulans) protein is DNA-directed RNA polymerase subunit beta.